The primary structure comprises 463 residues: 3-isopropylmalate dehydratase large subunit (463 aa).

Cys-347, Cys-407, and Cys-410 together coordinate [4Fe-4S] cluster.

It belongs to the aconitase/IPM isomerase family. LeuC type 1 subfamily. Heterodimer of LeuC and LeuD. [4Fe-4S] cluster is required as a cofactor.

The catalysed reaction is (2R,3S)-3-isopropylmalate = (2S)-2-isopropylmalate. Its pathway is amino-acid biosynthesis; L-leucine biosynthesis; L-leucine from 3-methyl-2-oxobutanoate: step 2/4. Catalyzes the isomerization between 2-isopropylmalate and 3-isopropylmalate, via the formation of 2-isopropylmaleate. The polypeptide is 3-isopropylmalate dehydratase large subunit (Buchnera aphidicola subsp. Cinara cedri (strain Cc)).